A 126-amino-acid polypeptide reads, in one-letter code: MPEPAKSAPAPKKGSKKAVTKTQKKDGKKRRKSRKESYAIYVYKVLKQVHPDTGISSKAMSIMNSFVNDVFERIAGEASRLAHYNKRSTITSREIQTAVRLLLPGELAKHAVSEGTKAVTKYTSAK.

The span at 1–12 (MPEPAKSAPAPK) shows a compositional bias: low complexity. The segment at 1–35 (MPEPAKSAPAPKKGSKKAVTKTQKKDGKKRRKSRK) is disordered. Lys-6 and Lys-13 each carry N6-acetyllysine. At Ser-15 the chain carries Phosphoserine. Residues Lys-16 and Lys-21 each carry the N6-acetyllysine modification. Ser-113 carries an O-linked (GlcNAc) serine glycan. Lys-121 is covalently cross-linked (Glycyl lysine isopeptide (Lys-Gly) (interchain with G-Cter in ubiquitin)).

Belongs to the histone H2B family. The nucleosome is a histone octamer containing two molecules each of H2A, H2B, H3 and H4 assembled in one H3-H4 heterotetramer and two H2A-H2B heterodimers. The octamer wraps approximately 147 bp of DNA. Monoubiquitination of Lys-121 by BRE1 gives a specific tag for epigenetic transcriptional activation and is also prerequisite for histone H3 'Lys-4' and 'Lys-79' methylation. Post-translationally, phosphorylated on Ser-15 during developmentally programmed apoptosis; which may facilitate apoptotic chromatin condensation. In terms of processing, glcNAcylation at Ser-113 promotes monoubiquitination of Lys-121. It fluctuates in response to extracellular glucose, and associates with transcribed genes.

Its subcellular location is the nucleus. The protein localises to the chromosome. Core component of nucleosome. Nucleosomes wrap and compact DNA into chromatin, limiting DNA accessibility to the cellular machineries which require DNA as a template. Histones thereby play a central role in transcription regulation, DNA repair, DNA replication and chromosomal stability. DNA accessibility is regulated via a complex set of post-translational modifications of histones, also called histone code, and nucleosome remodeling. In Xenopus laevis (African clawed frog), this protein is Histone H2B 1.1.